A 342-amino-acid chain; its full sequence is Transcriptional regulator of the unfolded protein response hacA (342 aa).

Positions M1–M105 are disordered. Basic and acidic residues-rich tracts occupy residues P35–K48 and K74–L88. The bZIP domain maps to E80–L143. The basic motif stretch occupies residues R82–R135. Residues L136 to L143 form a leucine-zipper region. Disordered stretches follow at residues E146–L167 and E306–T330. Positions T315–T330 are enriched in polar residues.

The protein belongs to the bZIP family.

It is found in the nucleus. In terms of biological role, master transcriptional regulator of the unfolded protein response (UPR) that recognizes and binds to the UPR element (UPRE) in the promoter of UPR-regulated genes. In the canonical UPR pathway, the ireA RNase splices the cytoplasmic mRNA hacA, which alters the reading frame to allow translation of the bZIP transcription factor hacA. Induces the expression of pmrA, scrA and spfA in response to UPR. This chain is Transcriptional regulator of the unfolded protein response hacA, found in Aspergillus fumigatus (strain ATCC MYA-4609 / CBS 101355 / FGSC A1100 / Af293) (Neosartorya fumigata).